Here is a 355-residue protein sequence, read N- to C-terminus: Alanine racemase (355 aa).

K34 serves as the catalytic Proton acceptor; specific for D-alanine. At K34 the chain carries N6-(pyridoxal phosphate)lysine. A substrate-binding site is contributed by R133. Y249 functions as the Proton acceptor; specific for L-alanine in the catalytic mechanism. Position 297 (M297) interacts with substrate.

This sequence belongs to the alanine racemase family. Requires pyridoxal 5'-phosphate as cofactor.

It catalyses the reaction L-alanine = D-alanine. It functions in the pathway amino-acid biosynthesis; D-alanine biosynthesis; D-alanine from L-alanine: step 1/1. Functionally, catalyzes the interconversion of L-alanine and D-alanine. May also act on other amino acids. This chain is Alanine racemase (alr), found in Rickettsia akari (strain Hartford).